The primary structure comprises 252 residues: Carboxy-S-adenosyl-L-methionine synthase (252 aa).

S-adenosyl-L-methionine-binding positions include Tyr45, 70–72 (GCS), 95–96 (DN), 123–124 (DI), Asn138, and Arg205.

Belongs to the class I-like SAM-binding methyltransferase superfamily. Cx-SAM synthase family. As to quaternary structure, homodimer.

It catalyses the reaction prephenate + S-adenosyl-L-methionine = carboxy-S-adenosyl-L-methionine + 3-phenylpyruvate + H2O. Its function is as follows. Catalyzes the conversion of S-adenosyl-L-methionine (SAM) to carboxy-S-adenosyl-L-methionine (Cx-SAM). The chain is Carboxy-S-adenosyl-L-methionine synthase from Photorhabdus laumondii subsp. laumondii (strain DSM 15139 / CIP 105565 / TT01) (Photorhabdus luminescens subsp. laumondii).